Consider the following 350-residue polypeptide: GDSL esterase/lipase At2g04570 (350 aa).

An N-terminal signal peptide occupies residues 1-23 (MGHLKSLFTILFLIAMSSTVTFA). S35 serves as the catalytic Nucleophile. N-linked (GlcNAc...) asparagine glycosylation is found at N98 and N117. Residues D325 and H328 contribute to the active site. Residue N343 is glycosylated (N-linked (GlcNAc...) asparagine).

The protein belongs to the 'GDSL' lipolytic enzyme family.

The protein localises to the secreted. The polypeptide is GDSL esterase/lipase At2g04570 (Arabidopsis thaliana (Mouse-ear cress)).